The following is a 451-amino-acid chain: D-ribitol-5-phosphate cytidylyltransferase (451 aa).

The segment at 1-29 is disordered; it reads MEAGPPGSARPAEPGPCLSGQRGADHTAS.

The protein belongs to the IspD/TarI cytidylyltransferase family. IspD subfamily. As to quaternary structure, homodimer. As to expression, ubiquitously expressed, with high expression in brain.

It is found in the cytoplasm. The protein localises to the cytosol. The enzyme catalyses D-ribitol 5-phosphate + CTP + H(+) = CDP-L-ribitol + diphosphate. It carries out the reaction D-ribose 5-phosphate + CTP + H(+) = CDP-D-ribose + diphosphate. The catalysed reaction is D-ribulose 5-phosphate + CTP + H(+) = CDP-D-ribulose + diphosphate. Its pathway is protein modification; protein glycosylation. Its function is as follows. Cytidylyltransferase required for protein O-linked mannosylation. Catalyzes the formation of CDP-ribitol nucleotide sugar from D-ribitol 5-phosphate. CDP-ribitol is a substrate of FKTN during the biosynthesis of the phosphorylated O-mannosyl trisaccharide (N-acetylgalactosamine-beta-3-N-acetylglucosamine-beta-4-(phosphate-6-)mannose), a carbohydrate structure present in alpha-dystroglycan (DAG1), which is required for binding laminin G-like domain-containing extracellular proteins with high affinity. Shows activity toward other pentose phosphate sugars and mediates formation of CDP-ribulose or CDP-ribose using CTP and ribulose-5-phosphate or ribose-5-phosphate, respectively. Not Involved in dolichol production. This is D-ribitol-5-phosphate cytidylyltransferase from Homo sapiens (Human).